A 247-amino-acid chain; its full sequence is MLLIPAIDLKDGQCVRLKQGDMDQATVFSEDPAAMARHWVNQGARRLHLVDLNGAFVGKPRNEAAIKAIIAEVGDEIPVQLGGGIRDLNTIERWLDDGLSYVIIGTAAVKNPGFLKDACAAFGGHIIVGLDAKDGKVATDGWSKLTGHEVADLARKYEDYGVESIIYTDIGRDGMLQGINIDATVKLARSMSIPVIASGGLSNMADIDQLCAVEGEGVEGVICGRAIYSGDLNFAAAQAHADKLGAE.

Residue D8 is the Proton acceptor of the active site. The active-site Proton donor is the D131.

This sequence belongs to the HisA/HisF family.

The protein resides in the cytoplasm. The enzyme catalyses 1-(5-phospho-beta-D-ribosyl)-5-[(5-phospho-beta-D-ribosylamino)methylideneamino]imidazole-4-carboxamide = 5-[(5-phospho-1-deoxy-D-ribulos-1-ylimino)methylamino]-1-(5-phospho-beta-D-ribosyl)imidazole-4-carboxamide. The protein operates within amino-acid biosynthesis; L-histidine biosynthesis; L-histidine from 5-phospho-alpha-D-ribose 1-diphosphate: step 4/9. The protein is 1-(5-phosphoribosyl)-5-[(5-phosphoribosylamino)methylideneamino] imidazole-4-carboxamide isomerase of Cupriavidus metallidurans (strain ATCC 43123 / DSM 2839 / NBRC 102507 / CH34) (Ralstonia metallidurans).